A 1152-amino-acid chain; its full sequence is Calcium-activated potassium channel subunit alpha-1 (1152 aa).

Residues 1-37 (MSSNIHANHLSLDASSSSSSSSSSSSSSSSSSSSVHE) are disordered. At 1–60 (MSSNIHANHLSLDASSSSSSSSSSSSSSSSSSSSVHEPKMDALIIPVTMEVPCDSRGQRM) the chain is on the extracellular side. Residues 15–34 (SSSSSSSSSSSSSSSSSSSS) are compositionally biased toward low complexity. A helical membrane pass occupies residues 61 to 81 (WWAFLASSMVTFFGGLFIILL). At 82–152 (WRTLKYLWTV…MISAQTLTGR (71 aa)) the chain is on the cytoplasmic side. Residues Cys-92, Cys-93, and Cys-95 are each lipidated (S-palmitoyl cysteine). Residues 153 to 173 (VLVVLVFALSIGALVIYFIDS) traverse the membrane as a helical segment. Residues 174 to 188 (SNPIESCQNFYKDFT) lie on the Extracellular side of the membrane. A helical transmembrane segment spans residues 189–209 (LQIDMAFNVFFLLYFGLRFIA). Residues 210–213 (ANDK) lie on the Cytoplasmic side of the membrane. The helical transmembrane segment at 214–234 (LWFWLEVNSVVDFFTVPPVFV) threads the bilayer. The Extracellular segment spans residues 235–238 (SVYL). Residues 239–259 (NRSWLGLRFLRALRLIQFSEI) form a helical; Voltage-sensor membrane-spanning segment. Residues 260–274 (LQFLNILKTSNSIKL) lie on the Cytoplasmic side of the membrane. The chain crosses the membrane as a helical span at residues 275 to 295 (VNLLSIFISTWLTAAGFIHLV). The Extracellular segment spans residues 296–309 (ENSGDPWENFQNNQ). Residues 310-332 (ALTYWECVYLLMVTMSTVGYGDV) constitute an intramembrane region (pore-forming). Residues 326–329 (TVGY) carry the Selectivity for potassium motif. The Extracellular segment spans residues 333-341 (YAKTTLGRL). Residues 342–362 (FMVFFILGGLAMFASYVPEII) traverse the membrane as a helical segment. Topologically, residues 363–1152 (ELIGNRKKYG…KQKYVQEERL (790 aa)) are cytoplasmic. The RCK N-terminal 1 domain maps to 381 to 523 (RKHIVVCGHI…WNWKEGDDAI (143 aa)). The Mg(2+) site is built by Glu-413, Gln-436, and Glu-438. The segment at 530 to 550 (LGFIAQSCLAQGLSTMLANLF) is segment S7. Residues 587–607 (LSFPTVCELCFVKLKLLMIAI) form a segment S8 region. Residues 651–655 (CKACH) form a heme-binding motif region. Residues 675-703 (EQPSTLSPKKKQRNGGMRNSPSSSPKLMR) are disordered. Thr-679 bears the Phosphothreonine mark. Phosphoserine is present on residues Ser-681, Ser-694, and Ser-698. Positions 753 to 773 (VLSGHVVVCIFGDVSSALIGL) are segment S9. The region spanning 755-899 (SGHVVVCIFG…MDRSSPDNSP (145 aa)) is the RCK N-terminal 2 domain. Thr-886 carries the post-translational modification Phosphothreonine. A phosphoserine mark is found at Ser-894 and Ser-898. The Calcium bowl motif lies at 919–941 (TELVNDTNVQFLDQDDDDDPDTE). Residues Gln-928, Asp-931, Asp-934, and Asp-936 each coordinate Ca(2+). The segment at 948-968 (FACGTAFAVSVLDSLMSATYF) is segment S10. The span at 1102–1127 (RASLSHSSHSSQSSSKKSSSVHSIPS) shows a compositional bias: low complexity. Residues 1102–1152 (RASLSHSSHSSQSSSKKSSSVHSIPSTANRQNRPKSRESRDKQKYVQEERL) are disordered. A compositionally biased stretch (basic and acidic residues) spans 1136 to 1152 (KSRESRDKQKYVQEERL). Ser-1137 and Ser-1140 each carry phosphoserine.

Belongs to the potassium channel family. Calcium-activated (TC 1.A.1.3) subfamily. KCa1.1/KCNMA1 sub-subfamily. Homotetramer; which constitutes the calcium-activated potassium channel. Interacts with beta subunits KCNMB1, KCNMB2, KCNMB3 and KCNMB4. Interacts with gamma subunits LRRC26, LRRC38, LRRC52 and LRRC55. Beta and gamma subunits are accessory, and modulate its activity. Interacts with RAB11B. Post-translationally, phosphorylated. Phosphorylation by kinases such as PKA and/or PKG. In smooth muscles, phosphorylation affects its activity. In terms of processing, palmitoylation by ZDHHC22 and ZDHHC23 within the intracellular linker between the S0 and S1 transmembrane domains regulates localization to the plasma membrane. Depalmitoylated by LYPLA1 and LYPLAL1, leading to retard exit from the trans-Golgi network.

The protein localises to the cell membrane. It catalyses the reaction K(+)(in) = K(+)(out). Its activity is regulated as follows. Ethanol and carbon monoxide-bound heme increase channel activation. Heme inhibits channel activation. Functionally, potassium channel activated by both membrane depolarization or increase in cytosolic Ca(2+) that mediates export of K(+). It is also activated by the concentration of cytosolic Mg(2+). Its activation dampens the excitatory events that elevate the cytosolic Ca(2+) concentration and/or depolarize the cell membrane. It therefore contributes to repolarization of the membrane potential. Plays a key role in controlling excitability in a number of systems, such as regulation of the contraction of smooth muscle, the tuning of hair cells in the cochlea, regulation of transmitter release, and innate immunity. In smooth muscles, its activation by high level of Ca(2+), caused by ryanodine receptors in the sarcoplasmic reticulum, regulates the membrane potential. In cochlea cells, its number and kinetic properties partly determine the characteristic frequency of each hair cell and thereby helps to establish a tonotopic map. Kinetics of KCNMA1 channels are determined by alternative splicing, phosphorylation status and its combination with modulating beta subunits. Highly sensitive to both iberiotoxin (IbTx) and charybdotoxin (CTX). This chain is Calcium-activated potassium channel subunit alpha-1 (KCNMA1), found in Sus scrofa (Pig).